The primary structure comprises 439 residues: MNHKVGFVSLGCPKALVDSERIITQLKAQGYELVPTYEDAGVVVINTCGFIDSAVQESLDTIKEAMAENGRVIVTGCLGAKADVIKNACPDVLHISGAHAYEEVVNAVHQHLPPPADPFTQLIPPQGIKLTPRHYAYLKISEGCNQKCTFCIIPTMRGKLQSYPMAQILTEAKKLKQAGVKELLVISQDTSAYGVDTRYQQVEWQGKTVNTRFYDLCEQLGELGIWVRLHYVYPYPHVDDIVPLMRDGLILPYLDIPLQHANSRILKAMKRPASSENTLLRIASWREICPDITLRSTFIVGFPGETEEEFSELLAFLKEAQLDRVGCFKYSPVEGAKANDLDNPVSEDIKEERYHRFMQVQAEISRNKLKNKIGSTQTVLIDEITEDQIIARSKSDAPEIDGLVYLPKISGITVGSFAEAMITDSDDYDLYGDLEYSLA.

Residues 3-113 (HKVGFVSLGC…VVNAVHQHLP (111 aa)) enclose the MTTase N-terminal domain. The [4Fe-4S] cluster site is built by cysteine 12, cysteine 48, cysteine 77, cysteine 144, cysteine 148, and cysteine 151. The region spanning 130 to 367 (LTPRHYAYLK…MQVQAEISRN (238 aa)) is the Radical SAM core domain. In terms of domain architecture, TRAM spans 370–436 (KNKIGSTQTV…DYDLYGDLEY (67 aa)).

Belongs to the methylthiotransferase family. RimO subfamily. The cofactor is [4Fe-4S] cluster.

The protein localises to the cytoplasm. It catalyses the reaction L-aspartate(89)-[ribosomal protein uS12]-hydrogen + (sulfur carrier)-SH + AH2 + 2 S-adenosyl-L-methionine = 3-methylsulfanyl-L-aspartate(89)-[ribosomal protein uS12]-hydrogen + (sulfur carrier)-H + 5'-deoxyadenosine + L-methionine + A + S-adenosyl-L-homocysteine + 2 H(+). In terms of biological role, catalyzes the methylthiolation of an aspartic acid residue of ribosomal protein uS12. This Legionella pneumophila (strain Corby) protein is Ribosomal protein uS12 methylthiotransferase RimO.